Consider the following 218-residue polypeptide: Cytidylate kinase (218 aa).

11-19 serves as a coordination point for ATP; that stretch reads GPGASGKGT.

Belongs to the cytidylate kinase family. Type 1 subfamily.

Its subcellular location is the cytoplasm. It carries out the reaction CMP + ATP = CDP + ADP. The enzyme catalyses dCMP + ATP = dCDP + ADP. This Neisseria meningitidis serogroup B (strain ATCC BAA-335 / MC58) protein is Cytidylate kinase.